The chain runs to 75 residues: Exodeoxyribonuclease 7 small subunit (75 aa).

It belongs to the XseB family. Heterooligomer composed of large and small subunits.

The protein resides in the cytoplasm. The enzyme catalyses Exonucleolytic cleavage in either 5'- to 3'- or 3'- to 5'-direction to yield nucleoside 5'-phosphates.. Its function is as follows. Bidirectionally degrades single-stranded DNA into large acid-insoluble oligonucleotides, which are then degraded further into small acid-soluble oligonucleotides. In Listeria welshimeri serovar 6b (strain ATCC 35897 / DSM 20650 / CCUG 15529 / CIP 8149 / NCTC 11857 / SLCC 5334 / V8), this protein is Exodeoxyribonuclease 7 small subunit.